Reading from the N-terminus, the 701-residue chain is Ribosomal RNA large subunit methyltransferase K/L (701 aa).

Positions 43–155 (LLYKSLMWSR…NNILHIMLDL (113 aa)) constitute a THUMP domain.

It belongs to the methyltransferase superfamily. RlmKL family.

It is found in the cytoplasm. The enzyme catalyses guanosine(2445) in 23S rRNA + S-adenosyl-L-methionine = N(2)-methylguanosine(2445) in 23S rRNA + S-adenosyl-L-homocysteine + H(+). It catalyses the reaction guanosine(2069) in 23S rRNA + S-adenosyl-L-methionine = N(2)-methylguanosine(2069) in 23S rRNA + S-adenosyl-L-homocysteine + H(+). Specifically methylates the guanine in position 2445 (m2G2445) and the guanine in position 2069 (m7G2069) of 23S rRNA. The polypeptide is Ribosomal RNA large subunit methyltransferase K/L (Buchnera aphidicola subsp. Acyrthosiphon pisum (strain APS) (Acyrthosiphon pisum symbiotic bacterium)).